We begin with the raw amino-acid sequence, 539 residues long: Tetracenomycin B2 monooxygenase-dioxygenase (539 aa).

Leucine 15, glutamate 35, glutamine 128, and leucine 152 together coordinate FAD. Residue tyrosine 231 is the Proton acceptor of the active site. FAD is bound at residue aspartate 313.

The protein belongs to the PheA/TfdB FAD monooxygenase family. FAD is required as a cofactor.

The enzyme catalyses tetracenomycin B2 + 2 NADPH + 2 O2 + 2 H(+) = 8-demethyltetracenomycin C + 2 NADP(+) + H2O. It carries out the reaction tetracenomycin A2 + 2 NADPH + 2 O2 + 2 H(+) = tetracenomycin C + 2 NADP(+) + H2O. The protein operates within antibiotic biosynthesis. Involved in the biosynthesis of elloramycin, an antitumor polyketide. In vivo, probably catalyzes the triple hydroxylation of 8-demethyltetracenomycin A2 (tetracenomycin B2) at positions C-4, C-4a and C-12a to give 8-demethyltetracenomycin C (8-DMTC). In vitro, catalyzes the triple hydroxylation of tetracenomycin A2 (TCM A2) to give tetracenomycin C (TCM C). Uses NADPH as an electron donor and requires molecular O(2). This chain is Tetracenomycin B2 monooxygenase-dioxygenase, found in Streptomyces olivaceus.